A 138-amino-acid chain; its full sequence is MLKEFREFAMKGNVVDLAVGVIIGAAFGAIVSSLVGDVIMPVIGAITGGLDFSNYFIGLSKEVTATNLVDAKKQGAVLAYGSFLTVTLNFLIIAFVLFIVIRLINRIKRSEEAKPAEAPAPTKDQVLLTEIRDILKTK.

3 helical membrane-spanning segments follow: residues 19-39 (VGVIIGAAFGAIVSSLVGDVI), 40-60 (MPVIGAITGGLDFSNYFIGLS), and 81-101 (GSFLTVTLNFLIIAFVLFIVI).

It belongs to the MscL family. In terms of assembly, homopentamer.

Its subcellular location is the cell inner membrane. Functionally, channel that opens in response to stretch forces in the membrane lipid bilayer. May participate in the regulation of osmotic pressure changes within the cell. The chain is Large-conductance mechanosensitive channel from Afipia carboxidovorans (strain ATCC 49405 / DSM 1227 / KCTC 32145 / OM5) (Oligotropha carboxidovorans).